Here is a 348-residue protein sequence, read N- to C-terminus: EGF-like domain containing protein 1 (348 aa).

The N-terminal stretch at Met-1–Cys-19 is a signal peptide. The EGF-like domain occupies Thr-60–Glu-92. 3 disulfides stabilise this stretch: Cys-64/Cys-74, Cys-68/Cys-80, and Cys-82/Cys-91. The 244-residue stretch at Arg-99 to Gln-342 folds into the ZP domain.

As to expression, prismatic layer of shell (at protein level). Expressed primarily in the mantle with highest level in the mantle edge and lower level in the mantle pallium.

Its subcellular location is the secreted. The protein is EGF-like domain containing protein 1 of Margaritifera margaritifera (Freshwater pearl mussel).